Reading from the N-terminus, the 128-residue chain is Kinase-associated lipoprotein B (128 aa).

Residues 1–25 (MSTFETGSIVKGFYKTGVYIGEITA) form the signal peptide. The N-palmitoyl cysteine moiety is linked to residue C26. C26 carries S-diacylglycerol cysteine lipidation.

The protein localises to the cell membrane. May play a role in the activation or the expression of KinB. The protein is Kinase-associated lipoprotein B (kapB) of Bacillus subtilis (strain 168).